A 69-amino-acid polypeptide reads, in one-letter code: DNA gyrase inhibitor YacG (69 aa).

Zn(2+)-binding residues include Cys-14, Cys-17, Cys-33, and Cys-37. The tract at residues 46-69 (ADEEKSIPGAPDMSDSDGWSEDQY) is disordered. Residues 59-69 (SDSDGWSEDQY) are compositionally biased toward acidic residues.

The protein belongs to the DNA gyrase inhibitor YacG family. As to quaternary structure, interacts with GyrB. Zn(2+) serves as cofactor.

In terms of biological role, inhibits all the catalytic activities of DNA gyrase by preventing its interaction with DNA. Acts by binding directly to the C-terminal domain of GyrB, which probably disrupts DNA binding by the gyrase. This is DNA gyrase inhibitor YacG from Aliivibrio fischeri (strain ATCC 700601 / ES114) (Vibrio fischeri).